The following is a 473-amino-acid chain: Lactate utilization protein B (473 aa).

4Fe-4S ferredoxin-type domains lie at 302-332 and 351-380; these read GSEF…GHSY and YDDY…LHDL. The [4Fe-4S] cluster site is built by cysteine 311, cysteine 314, cysteine 317, cysteine 321, cysteine 364, cysteine 367, and cysteine 371.

This sequence belongs to the LutB/YkgF family.

Functionally, is involved in L-lactate degradation and allows cells to grow with lactate as the sole carbon source. Has probably a role as an electron transporter during oxidation of L-lactate. The chain is Lactate utilization protein B from Bacillus anthracis (strain A0248).